An 828-amino-acid polypeptide reads, in one-letter code: Periplasmic nitrate reductase (828 aa).

Positions 1 to 31 (MKLSRRSFMKANAVAAAAAAAGLSVPGVARA) form a signal peptide, tat-type signal. In terms of domain architecture, 4Fe-4S Mo/W bis-MGD-type spans 39 to 95 (IKWDKAPCRFCGTGCGVLVGTQQGRVVACQGDPDAPVNRGLNCIKGYFLPKIMYGKD). Cysteine 46, cysteine 49, cysteine 53, and cysteine 81 together coordinate [4Fe-4S] cluster. Mo-bis(molybdopterin guanine dinucleotide) is bound by residues lysine 83, glutamine 150, asparagine 175, cysteine 179, 212 to 219 (WGANMAEM), 243 to 247 (STYQH), 262 to 264 (QSD), methionine 372, glutamine 376, asparagine 482, 508 to 509 (SD), lysine 531, aspartate 558, and 718 to 727 (TGRVLEHWHT). Position 794 (phenylalanine 794) interacts with substrate. Mo-bis(molybdopterin guanine dinucleotide) is bound by residues asparagine 802 and lysine 819.

It belongs to the prokaryotic molybdopterin-containing oxidoreductase family. NasA/NapA/NarB subfamily. Component of the periplasmic nitrate reductase NapAB complex composed of NapA and NapB. It depends on [4Fe-4S] cluster as a cofactor. Requires Mo-bis(molybdopterin guanine dinucleotide) as cofactor. In terms of processing, predicted to be exported by the Tat system. The position of the signal peptide cleavage has not been experimentally proven.

The protein localises to the periplasm. The catalysed reaction is 2 Fe(II)-[cytochrome] + nitrate + 2 H(+) = 2 Fe(III)-[cytochrome] + nitrite + H2O. In terms of biological role, catalytic subunit of the periplasmic nitrate reductase complex NapAB. Receives electrons from NapB and catalyzes the reduction of nitrate to nitrite. The chain is Periplasmic nitrate reductase from Escherichia coli O8 (strain IAI1).